The chain runs to 156 residues: Ribosomal RNA large subunit methyltransferase H (156 aa).

Residues Leu-72, Gly-104, and 123–128 each bind S-adenosyl-L-methionine; that span reads FGAMVW.

Belongs to the RNA methyltransferase RlmH family. Homodimer.

It localises to the cytoplasm. The catalysed reaction is pseudouridine(1915) in 23S rRNA + S-adenosyl-L-methionine = N(3)-methylpseudouridine(1915) in 23S rRNA + S-adenosyl-L-homocysteine + H(+). Functionally, specifically methylates the pseudouridine at position 1915 (m3Psi1915) in 23S rRNA. The polypeptide is Ribosomal RNA large subunit methyltransferase H (Ruegeria pomeroyi (strain ATCC 700808 / DSM 15171 / DSS-3) (Silicibacter pomeroyi)).